The primary structure comprises 390 residues: Lipoyl synthase, mitochondrial (390 aa).

The N-terminal 19 residues, 1–19, are a transit peptide targeting the mitochondrion; sequence MPTLLRILRPPRSPFTRCL. A disordered region spans residues 23–48; that stretch reads ATPSSSGSSSRSKFTESLETGPGLDD. Positions 98, 103, 109, 136, 140, 143, and 350 each coordinate [4Fe-4S] cluster. One can recognise a Radical SAM core domain in the interval 119–339; the sequence is AEGRSAATAT…KEVAENLGFL (221 aa).

This sequence belongs to the radical SAM superfamily. Lipoyl synthase family. The cofactor is [4Fe-4S] cluster.

It is found in the mitochondrion. It catalyses the reaction [[Fe-S] cluster scaffold protein carrying a second [4Fe-4S](2+) cluster] + N(6)-octanoyl-L-lysyl-[protein] + 2 oxidized [2Fe-2S]-[ferredoxin] + 2 S-adenosyl-L-methionine + 4 H(+) = [[Fe-S] cluster scaffold protein] + N(6)-[(R)-dihydrolipoyl]-L-lysyl-[protein] + 4 Fe(3+) + 2 hydrogen sulfide + 2 5'-deoxyadenosine + 2 L-methionine + 2 reduced [2Fe-2S]-[ferredoxin]. It functions in the pathway protein modification; protein lipoylation via endogenous pathway; protein N(6)-(lipoyl)lysine from octanoyl-[acyl-carrier-protein]: step 2/2. Catalyzes the radical-mediated insertion of two sulfur atoms into the C-6 and C-8 positions of the octanoyl moiety bound to the lipoyl domains of lipoate-dependent enzymes, thereby converting the octanoylated domains into lipoylated derivatives. This is Lipoyl synthase, mitochondrial from Laccaria bicolor (strain S238N-H82 / ATCC MYA-4686) (Bicoloured deceiver).